Here is a 397-residue protein sequence, read N- to C-terminus: Elongation factor Tu (397 aa).

The 197-residue stretch at 10-206 (KPHVNIGTIG…AVDTSIPQPE (197 aa)) folds into the tr-type G domain. The interval 19 to 26 (GHIDHGKT) is G1. GTP is bound at residue 19–26 (GHIDHGKT). T26 serves as a coordination point for Mg(2+). The tract at residues 62–66 (GITIS) is G2. Residues 83–86 (DCPG) form a G3 region. GTP-binding positions include 83-87 (DCPGH) and 138-141 (NKSD). The tract at residues 138 to 141 (NKSD) is G4. The interval 176–178 (SAL) is G5.

This sequence belongs to the TRAFAC class translation factor GTPase superfamily. Classic translation factor GTPase family. EF-Tu/EF-1A subfamily. In terms of assembly, monomer.

The protein resides in the cytoplasm. It catalyses the reaction GTP + H2O = GDP + phosphate + H(+). Its function is as follows. GTP hydrolase that promotes the GTP-dependent binding of aminoacyl-tRNA to the A-site of ribosomes during protein biosynthesis. The sequence is that of Elongation factor Tu from Salinispora arenicola (strain CNS-205).